Here is a 655-residue protein sequence, read N- to C-terminus: Large subunit GTPase 1 homolog (655 aa).

The disordered stretch occupies residues 1–31 (MGRRRAPGGGSLGRVLIRHQTQRSRSHRHTD). Residues 16–28 (LIRHQTQRSRSHR) are compositionally biased toward basic residues. Serine 93 and serine 97 each carry phosphoserine. The CP-type G domain maps to 164-441 (WRQLWRVIER…LCDCPGLVMP (278 aa)). 212 to 215 (NKAD) serves as a coordination point for GTP. Residue serine 252 is modified to Phosphoserine. The tract at residues 253–359 (KDEVNSVAGE…ENSQMSNKSH (107 aa)) is disordered. Residues 288–327 (EESESDDDDSEYEDCQEDEEEDWQTCSEEDSNPEEGQEEG) show a composition bias toward acidic residues. Over residues 328-339 (GCDRDQKEHGPE) the composition is skewed to basic and acidic residues. Polar residues predominate over residues 344–359 (QSRASPENSQMSNKSH). Residues 390 to 397 (GYPNVGKS) and 434 to 437 (DCPG) each bind GTP. The disordered stretch occupies residues 625–655 (SAENVPGKPWKKHGNRNKKEKSRRLYRHLDV). The span at 633 to 655 (PWKKHGNRNKKEKSRRLYRHLDV) shows a compositional bias: basic residues.

This sequence belongs to the TRAFAC class YlqF/YawG GTPase family. LSG1 subfamily.

It is found in the cytoplasm. Its subcellular location is the endoplasmic reticulum. It localises to the nucleus. The protein localises to the cajal body. It carries out the reaction GTP + H2O = GDP + phosphate + H(+). In terms of biological role, functions as a GTPase. May act by mediating the release of NMD3 from the 60S ribosomal subunit after export into the cytoplasm during the 60S ribosomal subunit maturation. In Rattus norvegicus (Rat), this protein is Large subunit GTPase 1 homolog.